Here is a 465-residue protein sequence, read N- to C-terminus: UPF0422 protein CBU_0937 (465 aa).

A signal peptide spans 1 to 23 (MTSKLVISALGLCVSGALSTTLA). Residues 28–60 (TTNQQITKRIDYLQAQINELRTQQKKERQKKKA) adopt a coiled-coil conformation.

Belongs to the UPF0422 family.

The protein is UPF0422 protein CBU_0937 of Coxiella burnetii (strain RSA 493 / Nine Mile phase I).